The following is a 268-amino-acid chain: L-aspartate dehydrogenase (268 aa).

NAD(+)-binding residues include Ala125 and Asn191. The active site involves His221.

Belongs to the L-aspartate dehydrogenase family.

It catalyses the reaction L-aspartate + NADP(+) + H2O = oxaloacetate + NH4(+) + NADPH + H(+). It carries out the reaction L-aspartate + NAD(+) + H2O = oxaloacetate + NH4(+) + NADH + H(+). It functions in the pathway cofactor biosynthesis; NAD(+) biosynthesis; iminoaspartate from L-aspartate (dehydrogenase route): step 1/1. Specifically catalyzes the NAD or NADP-dependent dehydrogenation of L-aspartate to iminoaspartate. This chain is L-aspartate dehydrogenase, found in Ralstonia nicotianae (strain ATCC BAA-1114 / GMI1000) (Ralstonia solanacearum).